The chain runs to 186 residues: Elongation factor P (186 aa).

The protein belongs to the elongation factor P family.

It localises to the cytoplasm. It functions in the pathway protein biosynthesis; polypeptide chain elongation. Involved in peptide bond synthesis. Stimulates efficient translation and peptide-bond synthesis on native or reconstituted 70S ribosomes in vitro. Probably functions indirectly by altering the affinity of the ribosome for aminoacyl-tRNA, thus increasing their reactivity as acceptors for peptidyl transferase. This Shewanella frigidimarina (strain NCIMB 400) protein is Elongation factor P.